Reading from the N-terminus, the 861-residue chain is MKNDNRIIKNTIKQFKEKLCKDFSQKTNITSITRKLAVFIDTILIQLFIKNKLHFGDNFCLLALGSYGRRELQLHSDIDLLILHTEKVSNIQLQRAQKFIQDCWDVGLEVSHQITTVSSCANLASQDLSVISTIMDMFLLCGHGALMEELIYQTHTLHMWPSHQYFFAKLQEQQNRYAKYGETAYNLEPNIKNGPGGLRDLQILLSISKRHFKIKKLAEGIGYGFITDKEYEELKYCQNFLWRVRFALHMLAGKPEERLSFDYQVKLAQFFGYQDQSHILAIEQFMKDYFKVIKRNRELNEMLLQWFNETIVYHQKQKIIRLDDEFQLSNRFIEVRNNRVFKQNPQSILKLFYWLVKRPDIEGVRASTIRLIRESLFLMGKRFRQSKETANIFINIFRTGNDPYDALQRMNRYGVLAHYLDCFATVTGQMQYDLFHAYTVDQHTLFVIRNISRFKKNEYAKQFPLCAKIITALEKPEILYLGALFHDIAKGRGGDHSELGAIEAQQFTQRHYMEAEDSKLIVWLVRYHLLMSQTAQRKDIYDPKTIEQFCQLLPHARYLDYLYLLTVADICGTNPTLWNAWKDSLLKELYHAAKTRLHKQQELLDEAALISIRKQYAMDILISDGISFRVIQDLWGQFKGKYFLHESPEVIARHTKAILNSKQFPVVIIMPHHSQGGTEVFIYMPHKDERFTITTSVLSNHHVTIQEAAIITCDNQFDLDTYIILDENNQAFLNEQRARDIQKSLCDHLANTGRLPAVSRRRLSRALTHFNVKTQINFIDDNTNHQTQLFLVTNDRPGLLATISRVFLTLNIHLHNAKIATAGERVEDMFYISNQTGYSLNHEEKTILKEKLILEISKSKY.

A uridylyltransferase region spans residues 1–321; the sequence is MKNDNRIIKN…VYHQKQKIIR (321 aa). The segment at 322–678 is uridylyl-removing; sequence LDDEFQLSNR…IMPHHSQGGT (357 aa). The HD domain occupies 440 to 562; sequence VDQHTLFVIR…LPHARYLDYL (123 aa). ACT domains are found at residues 679-760 and 788-861; these read EVFI…AVSR and QLFL…KSKY.

It belongs to the GlnD family. Mg(2+) is required as a cofactor.

The catalysed reaction is [protein-PII]-L-tyrosine + UTP = [protein-PII]-uridylyl-L-tyrosine + diphosphate. The enzyme catalyses [protein-PII]-uridylyl-L-tyrosine + H2O = [protein-PII]-L-tyrosine + UMP + H(+). Uridylyltransferase (UTase) activity is inhibited by glutamine, while glutamine activates uridylyl-removing (UR) activity. In terms of biological role, modifies, by uridylylation and deuridylylation, the PII regulatory proteins (GlnB and homologs), in response to the nitrogen status of the cell that GlnD senses through the glutamine level. Under low glutamine levels, catalyzes the conversion of the PII proteins and UTP to PII-UMP and PPi, while under higher glutamine levels, GlnD hydrolyzes PII-UMP to PII and UMP (deuridylylation). Thus, controls uridylylation state and activity of the PII proteins, and plays an important role in the regulation of nitrogen assimilation and metabolism. The sequence is that of Bifunctional uridylyltransferase/uridylyl-removing enzyme from Legionella pneumophila subsp. pneumophila (strain Philadelphia 1 / ATCC 33152 / DSM 7513).